The chain runs to 285 residues: Dermonecrotic toxin LlSicTox-alphaIII1ii (285 aa).

H12 is an active-site residue. Residues E32 and D34 each contribute to the Mg(2+) site. H47 (nucleophile) is an active-site residue. A disulfide bond links C51 and C57. Position 91 (D91) interacts with Mg(2+).

Belongs to the arthropod phospholipase D family. Class I subfamily. It depends on Mg(2+) as a cofactor. As to expression, expressed by the venom gland.

Its subcellular location is the secreted. The enzyme catalyses an N-(acyl)-sphingosylphosphocholine = an N-(acyl)-sphingosyl-1,3-cyclic phosphate + choline. It catalyses the reaction an N-(acyl)-sphingosylphosphoethanolamine = an N-(acyl)-sphingosyl-1,3-cyclic phosphate + ethanolamine. It carries out the reaction a 1-acyl-sn-glycero-3-phosphocholine = a 1-acyl-sn-glycero-2,3-cyclic phosphate + choline. The catalysed reaction is a 1-acyl-sn-glycero-3-phosphoethanolamine = a 1-acyl-sn-glycero-2,3-cyclic phosphate + ethanolamine. Its function is as follows. Dermonecrotic toxins cleave the phosphodiester linkage between the phosphate and headgroup of certain phospholipids (sphingolipid and lysolipid substrates), forming an alcohol (often choline) and a cyclic phosphate. This toxin acts on sphingomyelin (SM) with high activity (56.8 U/mg). It may also act on ceramide phosphoethanolamine (CPE), lysophosphatidylcholine (LPC) and lysophosphatidylethanolamine (LPE), but not on lysophosphatidylserine (LPS), and lysophosphatidylglycerol (LPG). It acts by transphosphatidylation, releasing exclusively cyclic phosphate products as second products. Induces dermonecrosis, hemolysis, increased vascular permeability, edema, inflammatory response, and platelet aggregation. Is lethal to mice. The polypeptide is Dermonecrotic toxin LlSicTox-alphaIII1ii (Loxosceles laeta (South American recluse spider)).